A 184-amino-acid chain; its full sequence is Large ribosomal subunit protein bL9 (184 aa).

The interval 156–184 (RQAKLQNQKSEQQEAEQDASKEAADADDS) is disordered. Residues 173–184 (DASKEAADADDS) show a composition bias toward basic and acidic residues.

This sequence belongs to the bacterial ribosomal protein bL9 family.

Binds to the 23S rRNA. This is Large ribosomal subunit protein bL9 from Wolbachia pipientis subsp. Culex pipiens (strain wPip).